Reading from the N-terminus, the 225-residue chain is 3-dehydroquinate dehydratase (225 aa).

3-dehydroquinate-binding positions include 30–32 (EWR) and arginine 62. Catalysis depends on histidine 118, which acts as the Proton donor/acceptor. Lysine 143 functions as the Schiff-base intermediate with substrate in the catalytic mechanism. The 3-dehydroquinate site is built by arginine 186, serine 205, and glutamine 209.

This sequence belongs to the type-I 3-dehydroquinase family. In terms of assembly, homodimer.

It carries out the reaction 3-dehydroquinate = 3-dehydroshikimate + H2O. It functions in the pathway metabolic intermediate biosynthesis; chorismate biosynthesis; chorismate from D-erythrose 4-phosphate and phosphoenolpyruvate: step 3/7. Its function is as follows. Involved in the third step of the chorismate pathway, which leads to the biosynthesis of aromatic amino acids. Catalyzes the cis-dehydration of 3-dehydroquinate (DHQ) and introduces the first double bond of the aromatic ring to yield 3-dehydroshikimate. The polypeptide is 3-dehydroquinate dehydratase (Streptococcus thermophilus (strain ATCC BAA-491 / LMD-9)).